The following is an 817-amino-acid chain: Leucine--tRNA ligase (817 aa).

The 'HIGH' region motif lies at 40–50 (PYPSGKLHMGH). The 'KMSKS' region motif lies at 578–582 (KMSKS). Lys581 serves as a coordination point for ATP.

This sequence belongs to the class-I aminoacyl-tRNA synthetase family.

It is found in the cytoplasm. The enzyme catalyses tRNA(Leu) + L-leucine + ATP = L-leucyl-tRNA(Leu) + AMP + diphosphate. This Caldicellulosiruptor saccharolyticus (strain ATCC 43494 / DSM 8903 / Tp8T 6331) protein is Leucine--tRNA ligase.